A 125-amino-acid chain; its full sequence is Cytochrome c oxidase assembly factor 6 homolog (125 aa).

Glycine 2 bears the N-acetylalanine mark. In terms of domain architecture, CHCH spans 55–98 (RQVCWGARDEYWKCLDENLEDASQCKKLRSSFESSCPQQWIKYF). Positions 58–68 (CWGARDEYWKC) match the Cx9C motif motif. Cystine bridges form between cysteine 58–cysteine 90 and cysteine 68–cysteine 79. The short motif at 79–90 (CKKLRSSFESSC) is the Cx10C motif element.

Belongs to the cytochrome c oxidase subunit 6B family. Interacts with COA1. Found in a complex with TMEM177, COX20, MT-CO2/COX2, COX18, SCO1 and SCO2. Interacts with MT-CO2/COX2 and SCO2. Interacts with SCO1. Interacts with COX20 in a MT-CO2/COX2- and COX18-dependent manner. Interacts with COX16.

Its subcellular location is the mitochondrion intermembrane space. Involved in the maturation of the mitochondrial respiratory chain complex IV subunit MT-CO2/COX2. Thereby, may regulate early steps of complex IV assembly. Mitochondrial respiratory chain complex IV or cytochrome c oxidase is the component of the respiratory chain that catalyzes the transfer of electrons from intermembrane space cytochrome c to molecular oxygen in the matrix and as a consequence contributes to the proton gradient involved in mitochondrial ATP synthesis. May also be required for efficient formation of respiratory supercomplexes comprised of complexes III and IV. In Homo sapiens (Human), this protein is Cytochrome c oxidase assembly factor 6 homolog (COA6).